Here is a 345-residue protein sequence, read N- to C-terminus: Phosphoribosylformylglycinamidine cyclo-ligase (345 aa).

This sequence belongs to the AIR synthase family.

The protein resides in the cytoplasm. It carries out the reaction 2-formamido-N(1)-(5-O-phospho-beta-D-ribosyl)acetamidine + ATP = 5-amino-1-(5-phospho-beta-D-ribosyl)imidazole + ADP + phosphate + H(+). It functions in the pathway purine metabolism; IMP biosynthesis via de novo pathway; 5-amino-1-(5-phospho-D-ribosyl)imidazole from N(2)-formyl-N(1)-(5-phospho-D-ribosyl)glycinamide: step 2/2. The protein is Phosphoribosylformylglycinamidine cyclo-ligase of Escherichia coli O45:K1 (strain S88 / ExPEC).